A 343-amino-acid chain; its full sequence is N-acetyl-gamma-glutamyl-phosphate reductase (343 aa).

Residue Cys-147 is part of the active site.

The protein belongs to the NAGSA dehydrogenase family. Type 1 subfamily.

It is found in the cytoplasm. The enzyme catalyses N-acetyl-L-glutamate 5-semialdehyde + phosphate + NADP(+) = N-acetyl-L-glutamyl 5-phosphate + NADPH + H(+). It participates in amino-acid biosynthesis; L-arginine biosynthesis; N(2)-acetyl-L-ornithine from L-glutamate: step 3/4. Its function is as follows. Catalyzes the NADPH-dependent reduction of N-acetyl-5-glutamyl phosphate to yield N-acetyl-L-glutamate 5-semialdehyde. The sequence is that of N-acetyl-gamma-glutamyl-phosphate reductase from Listeria innocua serovar 6a (strain ATCC BAA-680 / CLIP 11262).